The chain runs to 452 residues: Methionine aminopeptidase 2-1 (452 aa).

The interval 1–100 (MAAKVADDVA…VRIDEVFPND (100 aa)) is disordered. Residues 37–51 (EHDDSDDDNEAEDGA) are compositionally biased toward acidic residues. Residues 60–73 (KKKKKRKPRKKKKA) are compositionally biased toward basic residues. Residue His-205 participates in substrate binding. 3 residues coordinate a divalent metal cation: Asp-225, Asp-236, and His-305. His-313 provides a ligand contact to substrate. A divalent metal cation is bound by residues Glu-338 and Glu-433.

It belongs to the peptidase M24A family. Methionine aminopeptidase eukaryotic type 2 subfamily. Requires Co(2+) as cofactor. Zn(2+) serves as cofactor. It depends on Mn(2+) as a cofactor. The cofactor is Fe(2+).

Its subcellular location is the cytoplasm. It carries out the reaction Release of N-terminal amino acids, preferentially methionine, from peptides and arylamides.. In terms of biological role, cotranslationally removes the N-terminal methionine from nascent proteins. The N-terminal methionine is often cleaved when the second residue in the primary sequence is small and uncharged (Met-Ala-, Cys, Gly, Pro, Ser, Thr, or Val). The polypeptide is Methionine aminopeptidase 2-1 (Pyrenophora teres f. teres (strain 0-1) (Barley net blotch fungus)).